The sequence spans 555 residues: Urocanate hydratase (555 aa).

Residues 53–54 (GG), Gln131, 177–179 (GMG), Glu197, Arg202, 243–244 (NA), 264–268 (QTSAH), 274–275 (YL), and Tyr323 each bind NAD(+). Cys411 is an active-site residue. Residue Gly493 participates in NAD(+) binding.

It belongs to the urocanase family. The cofactor is NAD(+).

It is found in the cytoplasm. It catalyses the reaction 4-imidazolone-5-propanoate = trans-urocanate + H2O. The protein operates within amino-acid degradation; L-histidine degradation into L-glutamate; N-formimidoyl-L-glutamate from L-histidine: step 2/3. Functionally, catalyzes the conversion of urocanate to 4-imidazolone-5-propionate. This chain is Urocanate hydratase, found in Maricaulis maris (strain MCS10) (Caulobacter maris).